A 157-amino-acid chain; its full sequence is Crossover junction endodeoxyribonuclease RuvC (157 aa).

Residues Asp-7, Glu-67, and Asp-140 contribute to the active site. Positions 7, 67, and 140 each coordinate Mg(2+).

Belongs to the RuvC family. As to quaternary structure, homodimer which binds Holliday junction (HJ) DNA. The HJ becomes 2-fold symmetrical on binding to RuvC with unstacked arms; it has a different conformation from HJ DNA in complex with RuvA. In the full resolvosome a probable DNA-RuvA(4)-RuvB(12)-RuvC(2) complex forms which resolves the HJ. It depends on Mg(2+) as a cofactor.

The protein resides in the cytoplasm. The enzyme catalyses Endonucleolytic cleavage at a junction such as a reciprocal single-stranded crossover between two homologous DNA duplexes (Holliday junction).. In terms of biological role, the RuvA-RuvB-RuvC complex processes Holliday junction (HJ) DNA during genetic recombination and DNA repair. Endonuclease that resolves HJ intermediates. Cleaves cruciform DNA by making single-stranded nicks across the HJ at symmetrical positions within the homologous arms, yielding a 5'-phosphate and a 3'-hydroxyl group; requires a central core of homology in the junction. The consensus cleavage sequence is 5'-(A/T)TT(C/G)-3'. Cleavage occurs on the 3'-side of the TT dinucleotide at the point of strand exchange. HJ branch migration catalyzed by RuvA-RuvB allows RuvC to scan DNA until it finds its consensus sequence, where it cleaves and resolves the cruciform DNA. The sequence is that of Crossover junction endodeoxyribonuclease RuvC from Rickettsia prowazekii (strain Madrid E).